A 1234-amino-acid polypeptide reads, in one-letter code: ATP-dependent helicase/nuclease subunit A (1234 aa).

The 474-residue stretch at 2–475 folds into the UvrD-like helicase ATP-binding domain; it reads TQFTTSQQAA…IILAENFRST (474 aa). 23 to 30 lines the ATP pocket; that stretch reads ASAGSGKT. The UvrD-like helicase C-terminal domain occupies 507–806; it reads YGALDYGDAH…KLMTIHKSKG (300 aa).

The protein belongs to the helicase family. AddA subfamily. In terms of assembly, heterodimer of AddA and AddB/RexB. Mg(2+) serves as cofactor.

The catalysed reaction is Couples ATP hydrolysis with the unwinding of duplex DNA by translocating in the 3'-5' direction.. It carries out the reaction ATP + H2O = ADP + phosphate + H(+). Functionally, the heterodimer acts as both an ATP-dependent DNA helicase and an ATP-dependent, dual-direction single-stranded exonuclease. Recognizes the chi site generating a DNA molecule suitable for the initiation of homologous recombination. The AddA nuclease domain is required for chi fragment generation; this subunit has the helicase and 3' -&gt; 5' nuclease activities. In Lacticaseibacillus paracasei (strain ATCC 334 / BCRC 17002 / CCUG 31169 / CIP 107868 / KCTC 3260 / NRRL B-441) (Lactobacillus paracasei), this protein is ATP-dependent helicase/nuclease subunit A.